The chain runs to 35 residues: uncharacterized protein (35 aa).

Residues 14 to 34 traverse the membrane as a helical segment; that stretch reads LAHLIGIIYLIIILGTLVMLF.

The protein resides in the endoplasmic reticulum membrane. This is an uncharacterized protein from Saccharomyces cerevisiae (strain ATCC 204508 / S288c) (Baker's yeast).